Here is a 522-residue protein sequence, read N- to C-terminus: Golgin subfamily A member 6-like protein 10 (522 aa).

The span at 1 to 11 (MWPQPRLPPHP) shows a compositional bias: pro residues. Residues 1–77 (MWPQPRLPPH…DSATGIYGEG (77 aa)) are disordered. A compositionally biased stretch (polar residues) spans 51-62 (NGSSPDTATSGG). Residues 157 to 328 (SKVEQLQDET…RLCEQEKLPG (172 aa)) adopt a coiled-coil conformation. Residues 439–452 (KELEKSGGAEEPRG) are compositionally biased toward basic and acidic residues. Residues 439-503 (KELEKSGGAE…TGEAAGGAEE (65 aa)) are disordered. Composition is skewed to low complexity over residues 456–471 (AAAA…PQGA) and 489–503 (GEAV…GAEE).

It belongs to the GOLGA6 family.

This is Golgin subfamily A member 6-like protein 10 from Homo sapiens (Human).